A 226-amino-acid chain; its full sequence is Cobalt transport protein CbiM 2 (226 aa).

Helical transmembrane passes span 6-26, 43-63, 75-95, 107-127, 135-155, and 181-201; these read GFLPVEHAIGWSVASAPVVAY, MLLGVAAAFTFVLSALKMPSV, LGAILFGPSAVAPIGAVVLLF, TLGANIFSMAIVGPFAAAAVF, FPFGVGVFLAASLGDLLTYVT, and VFALTQIPLAISEGLLTVVVM.

This sequence belongs to the CbiM family. Forms an energy-coupling factor (ECF) transporter complex composed of an ATP-binding protein (A component, CbiO), a transmembrane protein (T component, CbiQ) and 2 possible substrate-capture proteins (S components, CbiM and CbiN) of unknown stoichimetry.

The protein resides in the cell inner membrane. Its pathway is cofactor biosynthesis; adenosylcobalamin biosynthesis. Functionally, part of the energy-coupling factor (ECF) transporter complex CbiMNOQ involved in cobalt import. The protein is Cobalt transport protein CbiM 2 of Pelobacter propionicus (strain DSM 2379 / NBRC 103807 / OttBd1).